The chain runs to 362 residues: MAMVPSGSGGGPPVIAEVEMNGGADSGAATVRATVVQASTVFYDTPATLDKAERLIEEAAGYGSQLVVFPEAFVGGYPRGSTFGFGANISIGNPKDKGKEEFRKYHAAAIEVPGPEVTRLAAMAGKYKVFLVMGVIEREGYTLYCSVLFFDPLGRYLGKHRKLMPTALERIIWGFGDGSTIPVYDTPLGKIGALICWENKMPLLRTALYGKGIEIYCAPTADSRQVWQASMTHIALEGGCFVLSANQFCRRKDYPPPPEYVFSGLGEEPSPDTVVCPGGSVIISPSGEVLAGPNYEGEALITADLDLGEIVRAKFDFDVVGHYARPEVLSLVVNDQPHLPVSFTSAAEKTTAAKSDSTAKPY.

A CN hydrolase domain is found at 31-307; that stretch reads VRATVVQAST…EALITADLDL (277 aa). Residue Glu-71 is the Proton acceptor of the active site. Lys-162 serves as the catalytic Proton donor. The Nucleophile role is filled by Cys-196.

Belongs to the carbon-nitrogen hydrolase superfamily. Nitrilase family.

It carries out the reaction a nitrile + 2 H2O = a carboxylate + NH4(+). The enzyme catalyses 3-cyano-L-alanine + 2 H2O = L-aspartate + NH4(+). Its function is as follows. Highly specific for beta-cyano-L-alanine (Ala(CN)). Low activity with 3-phenylpropionitrile (PPN). Not associated with auxin production but may be involved in cyanide detoxification. The chain is Bifunctional nitrilase/nitrile hydratase NIT4 (NIT4) from Oryza sativa subsp. japonica (Rice).